The chain runs to 85 residues: Cell division topological specificity factor (85 aa).

It belongs to the MinE family.

Its function is as follows. Prevents the cell division inhibition by proteins MinC and MinD at internal division sites while permitting inhibition at polar sites. This ensures cell division at the proper site by restricting the formation of a division septum at the midpoint of the long axis of the cell. This Shewanella oneidensis (strain ATCC 700550 / JCM 31522 / CIP 106686 / LMG 19005 / NCIMB 14063 / MR-1) protein is Cell division topological specificity factor.